The primary structure comprises 148 residues: Small ribosomal subunit protein eS19 (148 aa).

Residues 79–90 show a composition bias toward basic residues; the sequence is HGSTKNRGSRPA. Disordered stretches follow at residues 79–98 and 116–148; these read HGSTKNRGSRPAHHVDASGA and DEEKGGRRITQSGQRDLDRIAKTTVDEEEEDDE. Residues 130 to 140 show a composition bias toward basic and acidic residues; it reads RDLDRIAKTTV.

Belongs to the eukaryotic ribosomal protein eS19 family.

This Emericella nidulans (strain FGSC A4 / ATCC 38163 / CBS 112.46 / NRRL 194 / M139) (Aspergillus nidulans) protein is Small ribosomal subunit protein eS19 (rps19).